Consider the following 473-residue polypeptide: Trehalose-6-phosphate synthase (473 aa).

Arg-10 is a binding site for D-glucose 6-phosphate. 21-22 (GG) serves as a coordination point for UDP-alpha-D-glucose. Tyr-76 and Asp-130 together coordinate D-glucose 6-phosphate. UDP-alpha-D-glucose contacts are provided by Arg-262 and Lys-267. Position 300 (Arg-300) interacts with D-glucose 6-phosphate. Residues Phe-339 and 365–369 (LVAKE) contribute to the UDP-alpha-D-glucose site.

The protein belongs to the glycosyltransferase 20 family. Homotetramer.

The enzyme catalyses D-glucose 6-phosphate + UDP-alpha-D-glucose = alpha,alpha-trehalose 6-phosphate + UDP + H(+). It participates in glycan biosynthesis; trehalose biosynthesis. Functionally, probably involved in the osmoprotection via the biosynthesis of trehalose. Catalyzes the transfer of glucose from UDP-alpha-D-glucose (UDP-Glc) to D-glucose 6-phosphate (Glc-6-P) to form trehalose-6-phosphate. Acts with retention of the anomeric configuration of the UDP-sugar donor. The polypeptide is Trehalose-6-phosphate synthase (Citrobacter koseri (strain ATCC BAA-895 / CDC 4225-83 / SGSC4696)).